We begin with the raw amino-acid sequence, 347 residues long: Dihydroorotate dehydrogenase (quinone) (347 aa).

Residues 65-69 (AGLDK) and threonine 89 contribute to the FMN site. Lysine 69 contacts substrate. Position 114–118 (114–118 (NRMGF)) interacts with substrate. FMN contacts are provided by asparagine 146 and asparagine 179. A substrate-binding site is contributed by asparagine 179. The Nucleophile role is filled by serine 182. Asparagine 184 contributes to the substrate binding site. Residues lysine 224 and threonine 252 each coordinate FMN. A substrate-binding site is contributed by 253-254 (NT). FMN contacts are provided by residues glycine 275, glycine 304, and 325-326 (YT).

It belongs to the dihydroorotate dehydrogenase family. Type 2 subfamily. As to quaternary structure, monomer. FMN serves as cofactor.

It is found in the cell membrane. The enzyme catalyses (S)-dihydroorotate + a quinone = orotate + a quinol. It functions in the pathway pyrimidine metabolism; UMP biosynthesis via de novo pathway; orotate from (S)-dihydroorotate (quinone route): step 1/1. Its function is as follows. Catalyzes the conversion of dihydroorotate to orotate with quinone as electron acceptor. This chain is Dihydroorotate dehydrogenase (quinone), found in Herminiimonas arsenicoxydans.